Reading from the N-terminus, the 200-residue chain is uncharacterized protein (200 aa).

Residues 1–24 (MAIDKLPLLLFLSILLCLNRPVLS) form the signal peptide. N-linked (GlcNAc...) asparagine glycosylation is found at Asn44, Asn72, Asn99, Asn124, and Asn135. Residue Ser174 is the site of GPI-anchor amidated serine attachment. A propeptide spans 175-200 (NGFTFGIGLVSYLVIFMYSSFCFFLF) (removed in mature form).

Belongs to the UPF0277 family.

It localises to the cell membrane. This is an uncharacterized protein from Arabidopsis thaliana (Mouse-ear cress).